Here is an 81-residue protein sequence, read N- to C-terminus: CLAVATA3/ESR (CLE)-related protein 6 (81 aa).

The N-terminal stretch at Met1–Ala26 is a signal peptide. Hydroxyproline occurs at positions 73 and 76. Pro76 is a glycosylation site (O-linked (Ara...) hydroxyproline).

The protein belongs to the CLV3/ESR signal peptide family. In terms of processing, the O-glycosylation (arabinosylation) of the hydroxyproline Pro-76 enhances binding affinity of the CLE6p peptide for its receptor. In terms of tissue distribution, mostly expressed in roots, seedlings, stems and flowers, and, to a lower extent, in apex and siliques.

It is found in the secreted. The protein localises to the extracellular space. Extracellular signal peptide that regulates cell fate. The chain is CLAVATA3/ESR (CLE)-related protein 6 from Arabidopsis thaliana (Mouse-ear cress).